The primary structure comprises 323 residues: MNPNLLEKDLRGKETTNGSIRYKEANNFRSLPNSHTAACKTSLNNPSISRNHPHNKSASVLESEDEHGNERGENEKSLRMRGKSGINTKVCSRGHWRPTEDAKLKELVAQFGPQNWNLISNHLLGRSGKSCRLRWFNQLDPRINKRAFTEEEEFRLLAAHRAYGNKWALISRLFPGRTDNAVKNHWHVIMARRTRESQRQRQQPPPTLSRDAEMTVSSSCRYNQGKFINEEDDDDDVSAVSTCTTELSLTPPSSAYQPRFFNYDSTLASGKDGQCVQRAEVNGIYGKKMDHQNHHTISVSERKVEMKMRSGYYYFDFLGVGAS.

Residues 1-14 (MNPNLLEKDLRGKE) show a composition bias toward basic and acidic residues. The tract at residues 1 to 84 (MNPNLLEKDL…EKSLRMRGKS (84 aa)) is disordered. Positions 27–60 (NFRSLPNSHTAACKTSLNNPSISRNHPHNKSASV) are enriched in polar residues. The segment covering 66-78 (EHGNERGENEKSL) has biased composition (basic and acidic residues). HTH myb-type domains lie at 88 to 139 (TKVC…FNQL) and 140 to 194 (DPRI…ARRT). DNA-binding regions (H-T-H motif) lie at residues 116-138 (WNLISNHLLGRSGKSCRLRWFNQ) and 167-190 (WALISRLFPGRTDNAVKNHWHVIM). Residues 192 to 217 (RRTRESQRQRQQPPPTLSRDAEMTVS) are disordered.

In terms of assembly, forms homodimer. Interacts with the dephosphorylated active form of BES1 in the nucleus of quiescent center (QC) cells. Interacts with BPM1, BPM2, BPM3, BPM4, BPM5 and BPM6 at the promoter of FLOWERING LOCUS T (FT). In terms of tissue distribution, mostly expressed in flowers (at protein level) and siliques, and, to a lower extent, in roots, stems and leaves. Expressed in embryos (e.g. heart and torpedo stages) and cotyledons, and, at low levels, in roots and inflorescence. Accumulates specifically in root apical meristem quiescent center (QC) and vascular initial cells.

The protein localises to the nucleus. It localises to the cytoplasm. It is found in the cytosol. Its function is as follows. Acts as a cell-specific local repressor of quiescent center (QC) self-renewal by cell divisions in the primary root. Counteracts brassinosteroid (BR)-mediated cell division in the QC cells. Regulates maternally seed size, especially before the heart stage, promoting both endothelial cells expansion and cell number in the outer integument layer of the seed coat. Modulates the expression of genes involved in cell wall metabolism such as cell division and expansion. Negative regulator of flowering via the repression of FT transcription. This Arabidopsis thaliana (Mouse-ear cress) protein is Transcription factor MYB56.